A 418-amino-acid chain; its full sequence is Tyrosine--tRNA ligase (418 aa).

L-tyrosine is bound at residue Tyr34. The short motif at 39-48 is the 'HIGH' region element; sequence PTADSLHLGH. L-tyrosine-binding residues include Tyr169 and Gln173. The 'KMSKS' region signature appears at 229 to 233; that stretch reads KFGKS. Residue Lys232 participates in ATP binding. Residues 352–418 enclose the S4 RNA-binding domain; that stretch reads LNLVDMLVTA…GKKKYAVLTY (67 aa).

This sequence belongs to the class-I aminoacyl-tRNA synthetase family. TyrS type 1 subfamily. Homodimer.

Its subcellular location is the cytoplasm. It carries out the reaction tRNA(Tyr) + L-tyrosine + ATP = L-tyrosyl-tRNA(Tyr) + AMP + diphosphate + H(+). Its function is as follows. Catalyzes the attachment of tyrosine to tRNA(Tyr) in a two-step reaction: tyrosine is first activated by ATP to form Tyr-AMP and then transferred to the acceptor end of tRNA(Tyr). The sequence is that of Tyrosine--tRNA ligase from Streptococcus pyogenes serotype M28 (strain MGAS6180).